A 379-amino-acid polypeptide reads, in one-letter code: uncharacterized protein (379 aa).

Disordered stretches follow at residues 1–25 (MASD…EKGK), 128–158 (QGKT…IERT), and 355–379 (TEKT…QGDI). Over residues 128–141 (QGKTTSATTSNSTI) the composition is skewed to polar residues.

This is an uncharacterized protein from Caenorhabditis elegans.